A 174-amino-acid chain; its full sequence is Interferon gamma (174 aa).

The signal sequence occupies residues 1–23 (MNSTRCILALLLCLTQAMSGCYG). The residue at position 24 (Gln24) is a Pyrrolidone carboxylic acid. N-linked (GlcNAc...) asparagine glycans are attached at residues Asn39 and Asn106.

It belongs to the type II (or gamma) interferon family. As to quaternary structure, homodimer. Interacts with IFNGR1 (via extracellular domain); this interaction promotes IFNGR1 dimerization. In terms of tissue distribution, released primarily from activated T lymphocytes.

The protein resides in the secreted. Type II interferon produced by immune cells such as T-cells and NK cells that plays crucial roles in antimicrobial, antiviral, and antitumor responses by activating effector immune cells and enhancing antigen presentation. Primarily signals through the JAK-STAT pathway after interaction with its receptor IFNGR1 to affect gene regulation. Upon IFNG binding, IFNGR1 intracellular domain opens out to allow association of downstream signaling components JAK2, JAK1 and STAT1, leading to STAT1 activation, nuclear translocation and transcription of IFNG-regulated genes. Many of the induced genes are transcription factors such as IRF1 that are able to further drive regulation of a next wave of transcription. Plays a role in class I antigen presentation pathway by inducing a replacement of catalytic proteasome subunits with immunoproteasome subunits. In turn, increases the quantity, quality, and repertoire of peptides for class I MHC loading. Increases the efficiency of peptide generation also by inducing the expression of activator PA28 that associates with the proteasome and alters its proteolytic cleavage preference. Up-regulates as well MHC II complexes on the cell surface by promoting expression of several key molecules such as cathepsins B/CTSB, H/CTSH, and L/CTSL. Participates in the regulation of hematopoietic stem cells during development and under homeostatic conditions by affecting their development, quiescence, and differentiation. This Phodopus sungorus (Striped hairy-footed hamster) protein is Interferon gamma (IFNG).